A 714-amino-acid chain; its full sequence is Fatty acid oxidation complex subunit alpha (714 aa).

The enoyl-CoA hydratase stretch occupies residues Met1–Pro190. The segment at Ala306–Gln714 is 3-hydroxyacyl-CoA dehydrogenase.

It in the N-terminal section; belongs to the enoyl-CoA hydratase/isomerase family. In the central section; belongs to the 3-hydroxyacyl-CoA dehydrogenase family. As to quaternary structure, heterotetramer of two alpha chains (FadJ) and two beta chains (FadI).

The protein resides in the cytoplasm. The enzyme catalyses a (3S)-3-hydroxyacyl-CoA = a (2E)-enoyl-CoA + H2O. It carries out the reaction a 4-saturated-(3S)-3-hydroxyacyl-CoA = a (3E)-enoyl-CoA + H2O. The catalysed reaction is a (3S)-3-hydroxyacyl-CoA + NAD(+) = a 3-oxoacyl-CoA + NADH + H(+). It catalyses the reaction (3S)-3-hydroxybutanoyl-CoA = (3R)-3-hydroxybutanoyl-CoA. It participates in lipid metabolism; fatty acid beta-oxidation. Catalyzes the formation of a hydroxyacyl-CoA by addition of water on enoyl-CoA. Also exhibits 3-hydroxyacyl-CoA epimerase and 3-hydroxyacyl-CoA dehydrogenase activities. The polypeptide is Fatty acid oxidation complex subunit alpha (Escherichia coli (strain 55989 / EAEC)).